Reading from the N-terminus, the 309-residue chain is HPr kinase/phosphorylase (309 aa).

Catalysis depends on residues histidine 138 and lysine 159. 153–160 (GDSGIGKS) is a binding site for ATP. Residue serine 160 participates in Mg(2+) binding. Aspartate 177 acts as the Proton acceptor; for phosphorylation activity. Proton donor; for dephosphorylation activity in catalysis. Positions 201-210 (LEIRGVGIID) are important for the catalytic mechanism of both phosphorylation and dephosphorylation. Glutamate 202 contributes to the Mg(2+) binding site. The active site involves arginine 243. The segment at 264 to 269 (PVKTGR) is important for the catalytic mechanism of dephosphorylation.

Belongs to the HPrK/P family. As to quaternary structure, homohexamer. Mg(2+) is required as a cofactor.

It carries out the reaction [HPr protein]-L-serine + ATP = [HPr protein]-O-phospho-L-serine + ADP + H(+). It catalyses the reaction [HPr protein]-O-phospho-L-serine + phosphate + H(+) = [HPr protein]-L-serine + diphosphate. With respect to regulation, kinase activity is slightly activated by fructose 1,6-bisphosphate (FBP) at low ATP concentrations, and is inhibited by inorganic phosphate (Pi). Moreover, FBP, phosphoenolpyruvate and 2-phosphoglycerate, but not fructose 1-P, fructose 6-P, and ribulose 1,5-bisphosphate protect kinase activity against inhibition by Pi. Dephosphorylation of P-Ser-HPr by S.salivarius HPrK/P is strictly dependent on the presence of Pi, and is inhibited by FBP. FBP seems to modulate HPrK/P activities by enhancing affinity of the active site for ATP and, conversely, lowering the affinity for Pi. Catalyzes the ATP- as well as probably the pyrophosphate-dependent phosphorylation of 'Ser-46' in HPr, a phosphocarrier protein of the phosphoenolpyruvate-dependent sugar phosphotransferase system (PTS). HprK/P also catalyzes the pyrophosphate-producing, inorganic phosphate-dependent dephosphorylation (phosphorolysis) of seryl-phosphorylated HPr (P-Ser-HPr). The two antagonistic activities of HprK/P are regulated by several intracellular metabolites, which change their concentration in response to the absence or presence of rapidly metabolisable carbon sources (glucose, fructose, etc.) in the growth medium. Therefore, by controlling the phosphorylation state of HPr, the bifunctional HPr kinase/phosphorylase is a sensor enzyme that plays a major role in the regulation of carbon metabolism and sugar transport: it probably mediates carbon catabolite repression (CCR), and regulates PTS-catalyzed carbohydrate uptake and inducer exclusion. The protein is HPr kinase/phosphorylase (hprK) of Streptococcus salivarius.